Reading from the N-terminus, the 388-residue chain is S-adenosylmethionine synthase 1 (388 aa).

Mg(2+) is bound at residue Glu11. His17 contributes to the ATP binding site. Glu45 contributes to the K(+) binding site. 2 residues coordinate L-methionine: Glu58 and Gln101. Residues 168 to 170 (DAK), 233 to 236 (SGRF), Asp244, 250 to 251 (RK), Ala267, Lys271, and Lys275 contribute to the ATP site. Residue Asp244 coordinates L-methionine. Lys275 contacts L-methionine.

Belongs to the AdoMet synthase family. In terms of assembly, homotetramer. It depends on Mn(2+) as a cofactor. Mg(2+) is required as a cofactor. Requires Co(2+) as cofactor. K(+) serves as cofactor. As to expression, mostly in Roots.

It localises to the cytoplasm. The enzyme catalyses L-methionine + ATP + H2O = S-adenosyl-L-methionine + phosphate + diphosphate. The protein operates within amino-acid biosynthesis; S-adenosyl-L-methionine biosynthesis; S-adenosyl-L-methionine from L-methionine: step 1/1. In terms of biological role, catalyzes the formation of S-adenosylmethionine from methionine and ATP. The reaction comprises two steps that are both catalyzed by the same enzyme: formation of S-adenosylmethionine (AdoMet) and triphosphate, and subsequent hydrolysis of the triphosphate. The chain is S-adenosylmethionine synthase 1 (SAMS1) from Pinus contorta (Shore pine).